The primary structure comprises 247 residues: TLC domain-containing protein 1 (247 aa).

A signal peptide spans 1 to 27; that stretch reads MPLLFHPAWPLLLGATLTFRALRRVLC. Residues 28-46 lie on the Extracellular side of the membrane; it reads RLPQPAHVQTDPLRTWRWH. In terms of domain architecture, TLC spans 40–234; it reads LRTWRWHNLL…LLRSDFCPER (195 aa). The helical transmembrane segment at 47 to 67 threads the bilayer; the sequence is NLLVSFTHSIVSGIWALLCLW. The Cytoplasmic segment spans residues 68 to 83; sequence QTPEMLVEIETAWSAS. A helical transmembrane segment spans residues 84–104; sequence GYLLVCFSAGYFIHDTVDIVV. Over 105-123 the chain is Extracellular; it reads SKQTRASWEYLVHHVMAMG. An intramembrane region (helical) is located at residues 124-144; sequence AFFSGIFWKRFVGGGVLTLLV. Over 145 to 173 the chain is Extracellular; the sequence is EVSNIFLTLRMMMKINNAQDLLLYKVNKY. The helical transmembrane segment at 174-194 threads the bilayer; the sequence is INLVMYFLFRLAPQAYLTKFF. The Cytoplasmic portion of the chain corresponds to 195-201; that stretch reads LQYAGQR. Residues 202 to 222 form a helical membrane-spanning segment; sequence TLGTFLLAILLMLDLMIIIYF. Residues 223–247 lie on the Extracellular side of the membrane; that stretch reads SRLLRSDFCPERAPRRQQKDKFLTE.

It localises to the cell membrane. In terms of biological role, regulates the composition and fluidity of the plasma membrane. Inhibits the incorporation of membrane-fluidizing phospholipids containing omega-3 long-chain polyunsaturated fatty acids (LCPUFA) and thereby promotes membrane rigidity. Does not appear to have any effect on LCPUFA synthesis. The polypeptide is TLC domain-containing protein 1 (Tlcd1) (Mus musculus (Mouse)).